The primary structure comprises 474 residues: Synaptotagmin-17 (474 aa).

A disordered region spans residues 60-112 (WLMASRSSDKDGDSVHTASEVPLTPRTNSPDGRRSSSDTSKSTYSLTRRISSL). Over residues 96–112 (SDTSKSTYSLTRRISSL) the composition is skewed to low complexity. Phosphoserine is present on residues S118 and S119. 2 C2 domains span residues 184 to 310 (QLGM…HWWK) and 321 to 455 (ELGE…EQWH).

The protein belongs to the synaptotagmin family. In terms of tissue distribution, expressed abundantly in brain (frontal and temporal lobes, hippocampus, hypothalamus, amygdala, substantia nigra, and pituitary), kidney, and prostate. Expressed in fetal brain, kidney and lung. Expressed in melanocytes.

Its subcellular location is the membrane. In terms of biological role, plays a role in dendrite formation by melanocytes. The protein is Synaptotagmin-17 (SYT17) of Homo sapiens (Human).